Here is a 193-residue protein sequence, read N- to C-terminus: dCTP deaminase (193 aa).

Residues 110 to 115 (RSSLAR), Asp128, 136 to 138 (VLE), Tyr171, Lys178, and Gln182 contribute to the dCTP site. The active-site Proton donor/acceptor is the Glu138. The tract at residues 169 to 193 (RPYNRRQDAKYKDQQGAVASRIDKD) is disordered.

The protein belongs to the dCTP deaminase family. In terms of assembly, homotrimer.

The catalysed reaction is dCTP + H2O + H(+) = dUTP + NH4(+). It functions in the pathway pyrimidine metabolism; dUMP biosynthesis; dUMP from dCTP (dUTP route): step 1/2. Catalyzes the deamination of dCTP to dUTP. In Pectobacterium carotovorum subsp. carotovorum (strain PC1), this protein is dCTP deaminase.